Reading from the N-terminus, the 81-residue chain is Serine rich endogenous peptide 21 (81 aa).

The signal sequence occupies residues 1-40; sequence MLELHFEFIDLNQPKMYKFVVCLLTLSFLLLSGLSNTALA. The SCOOP motif motif lies at 65-79; sequence KVRVLPSASRRGPGQ. The short motif at 71–73 is the SxS motif essential for MIK2 binding element; sequence SAS.

This sequence belongs to the serine rich endogenous peptide (SCOOP) phytocytokine family. Interacts with MIK2 (via extracellular leucine-rich repeat domain); this interaction triggers the formation of complex between MIK2 and the BAK1/SERK3 and SERK4 coreceptors, and subsequent BAK1 activation by phosphorylation.

It is found in the cell membrane. The protein localises to the secreted. It localises to the extracellular space. Its subcellular location is the apoplast. Brassicaceae-specific phytocytokine (plant endogenous peptide released into the apoplast) perceived by MIK2 in a BAK1/SERK3 and SERK4 coreceptors-dependent manner, that modulates various physiological and antimicrobial processes including growth prevention and reactive oxygen species (ROS) response regulation. This is Serine rich endogenous peptide 21 from Arabidopsis thaliana (Mouse-ear cress).